A 534-amino-acid polypeptide reads, in one-letter code: Bifunctional purine biosynthesis protein PurH (534 aa).

Residues Met1–Val148 form the MGS-like domain.

This sequence belongs to the PurH family.

The enzyme catalyses (6R)-10-formyltetrahydrofolate + 5-amino-1-(5-phospho-beta-D-ribosyl)imidazole-4-carboxamide = 5-formamido-1-(5-phospho-D-ribosyl)imidazole-4-carboxamide + (6S)-5,6,7,8-tetrahydrofolate. It carries out the reaction IMP + H2O = 5-formamido-1-(5-phospho-D-ribosyl)imidazole-4-carboxamide. The protein operates within purine metabolism; IMP biosynthesis via de novo pathway; 5-formamido-1-(5-phospho-D-ribosyl)imidazole-4-carboxamide from 5-amino-1-(5-phospho-D-ribosyl)imidazole-4-carboxamide (10-formyl THF route): step 1/1. It participates in purine metabolism; IMP biosynthesis via de novo pathway; IMP from 5-formamido-1-(5-phospho-D-ribosyl)imidazole-4-carboxamide: step 1/1. The sequence is that of Bifunctional purine biosynthesis protein PurH from Shewanella denitrificans (strain OS217 / ATCC BAA-1090 / DSM 15013).